The following is a 159-amino-acid chain: uncharacterized protein (159 aa).

3 residues coordinate a divalent metal cation: His-44, His-124, and His-128.

This sequence belongs to the DinB family.

This is an uncharacterized protein from Bacillus subtilis (strain 168).